The chain runs to 1050 residues: Diacylglycerol kinase iota (1050 aa).

3 disordered regions span residues 53-74 (PSSS…GSGA), 92-111 (AAAA…EKEE), and 328-356 (SLKA…ETKG). Low complexity predominate over residues 92 to 105 (AAAAAALEEPAAAG). Residues 332–347 (SNRKKKRTSFKRKASK) show a composition bias toward basic residues. The region spanning 367–502 (PLMKPLLVFV…DRWNLHVERN (136 aa)) is the DAGKc domain. ANK repeat units lie at residues 943–972 (GHCS…AELL) and 979–1008 (TGET…SLRQ). Residues 1048 to 1050 (TAV) carry the PDZ-binding motif.

Belongs to the eukaryotic diacylglycerol kinase family. As to quaternary structure, interacts (via PDZ-binding motif) with DLG4; controls the localization of DGKI to the synapse. Interacts (via PDZ-binding motif) with DLG1. Interacts (via PDZ-binding motif) with DLG2. Interacts (via PDZ-binding motif) with DLG3. May interact with RASGRP3; involved in the regulation of RASGRP3 activity. In terms of tissue distribution, in brain, expressed in the hippocampus and cerebellum with stronger expression in the Purkinje cell layer (at protein level). Expressed in kidney.

It localises to the cell projection. It is found in the axon. The protein resides in the dendrite. Its subcellular location is the presynapse. The protein localises to the postsynapse. It localises to the postsynaptic density. It is found in the synaptic cell membrane. The protein resides in the cytoplasmic vesicle. Its subcellular location is the secretory vesicle. The protein localises to the synaptic vesicle membrane. It localises to the cytoplasm. It is found in the cytosol. The protein resides in the nucleus. The enzyme catalyses a 1,2-diacyl-sn-glycerol + ATP = a 1,2-diacyl-sn-glycero-3-phosphate + ADP + H(+). The catalysed reaction is 1,2-di-(9Z-octadecenoyl)-sn-glycerol + ATP = 1,2-di-(9Z-octadecenoyl)-sn-glycero-3-phosphate + ADP + H(+). It carries out the reaction 1-octadecanoyl-2-(5Z,8Z,11Z,14Z-eicosatetraenoyl)-sn-glycerol + ATP = 1-octadecanoyl-2-(5Z,8Z,11Z,14Z-eicosatetraenoyl)-sn-glycero-3-phosphate + ADP + H(+). It catalyses the reaction 1-octadecanoyl-2-(9Z,12Z)-octadecadienoyl-sn-glycerol + ATP = 1-octadecanoyl-2-(9Z,12Z-octadecadienoyl)-sn-glycero-3-phosphate + ADP + H(+). The protein operates within lipid metabolism; glycerolipid metabolism. Its function is as follows. Diacylglycerol kinase that converts diacylglycerol/DAG into phosphatidic acid/phosphatidate/PA and regulates the respective levels of these two bioactive lipids. Thereby, acts as a central switch between the signaling pathways activated by these second messengers with different cellular targets and opposite effects in numerous biological processes. Has probably no preference for any of the diacylglycerols in terms of the acyl chain composition, especially for the acyl chain at the sn-2 position. By controlling the diacylglycerol/DAG-mediated activation of RASGRP3, negatively regulates the Rap1 signaling pathway. May play a role in presynaptic diacylglycerol/DAG signaling and control neurotransmitter release during metabotropic glutamate receptor-dependent long-term depression. This chain is Diacylglycerol kinase iota, found in Mus musculus (Mouse).